The chain runs to 1113 residues: MGFNEFMSKLFGNKSQRDLKEVKPFVDKIKVAYGEIERLSDDDLRGRTAILRQKIQDYVKDERAEIDKLKVEVEGKDLDEREEIWAKVDKLEKEILDKMEVVLDEILPEAFAIIKDTARRFAQNETIRVKATDLDRDLAINHDFVSIEGDTAVYQNHWVAGGNEILWDMIHYDVQLIGGTVLHKGKIAEMATGEGKTLVATLPVFLNALTGNGVHVVTVNDYLSKRDSEWMGPLYMFHGLTVDCIDKHQPNSDARRKAYNADITFGTNNEFGFDYLRDNMATSPKDLVQRKHNYAIVDEVDSVLIDDARTPLIISGPTPKGEDQLFEEFLPNVEKVVEAQRKLCSQLLIDAKNKMASEDKKEQEEGSLLLYRSFKGLPKNKQLIKYLSEPGIKSSMLKTEEAYMAENMRNMHLVTDELYFIIDEKRNSVELTEKGIDLLTSRTDDPKFFVLPDIAAELSALDNMESDAEKRREAKDEIIANYSIKSERVHTVNQLLKAYALFEKDDQYVVMDNKVLIVDEQTGRIMDGRRYSDGLHQAIEAKEHVKVEAATQTFATITLQNYFRMYHKLAGMTGTAETEAGELWDIYKLDVVVIPTNKPIARKDMNDRIYKTAREKYAAVIEEIVRLVEEGRPVLVGTTSVEISELLSRMLRLRGIQHNVLNAKLHQKEAEIVAQAGQKGTVTIATNMAGRGTDIKLSAEVKKAGGLAIIGTERHESRRVDRQLRGRSGRQGDPGSSIFYVSLEDHLMRLFATEKIASLMDRLGFKEGEVLENNMLSKSVERAQKKVEENNFGIRKHLLEYDDVMNSQREVIYTRRRHALMGERIGMDVLNTIYDVCKALIDNYAEANDFEGFKEDLMRALAIESPITQEIFRGKKAEELTDMLFDEAYKSFQRKMDLIAEVAHPVVHQVFETQAAVYERILIPITDGKRVYNIGCNLREADETRGKSIIKEFEKAIVLHTIDESWKEHLREMDELRNSVQNASYENKDPLLIYKLESYELFRKMVEAMNRKTVAILMRARIPVPEAPSQEELEHRRQIEIRHAAEQRTDMSKYRTQKDDIEAQQKAQRDAASRPQGAAAPQTPIRNENKIGRNDPCPCGSGKKFKQCHGRNL.

Residues Q175, 193–197 (GEGKT), and D694 contribute to the ATP site. Residues 1042-1072 (RHAAEQRTDMSKYRTQKDDIEAQQKAQRDAA) are compositionally biased toward basic and acidic residues. The interval 1042-1113 (RHAAEQRTDM…KFKQCHGRNL (72 aa)) is disordered. 4 residues coordinate Zn(2+): C1097, C1099, C1108, and H1109. The segment covering 1103 to 1113 (KKFKQCHGRNL) has biased composition (basic residues).

This sequence belongs to the SecA family. Monomer and homodimer. Part of the essential Sec protein translocation apparatus which comprises SecA, SecYEG and auxiliary proteins SecDF. Other proteins may also be involved. Zn(2+) is required as a cofactor.

It is found in the cell inner membrane. The protein resides in the cytoplasm. The enzyme catalyses ATP + H2O + cellular proteinSide 1 = ADP + phosphate + cellular proteinSide 2.. Part of the Sec protein translocase complex. Interacts with the SecYEG preprotein conducting channel. Has a central role in coupling the hydrolysis of ATP to the transfer of proteins into and across the cell membrane, serving as an ATP-driven molecular motor driving the stepwise translocation of polypeptide chains across the membrane. The sequence is that of Protein translocase subunit SecA from Porphyromonas gingivalis (strain ATCC 33277 / DSM 20709 / CIP 103683 / JCM 12257 / NCTC 11834 / 2561).